The following is a 625-amino-acid chain: Glutamine--fructose-6-phosphate aminotransferase [isomerizing] (625 aa).

Cysteine 2 acts as the Nucleophile; for GATase activity in catalysis. Positions 2–229 constitute a Glutamine amidotransferase type-2 domain; it reads CGIVGFVGRT…NDQIVTITAD (228 aa). 2 SIS domains span residues 296 to 436 and 470 to 615; these read IDES…LRGN and LAQD…VDQP. Lysine 620 serves as the catalytic For Fru-6P isomerization activity.

Homodimer.

It localises to the cytoplasm. The catalysed reaction is D-fructose 6-phosphate + L-glutamine = D-glucosamine 6-phosphate + L-glutamate. Its function is as follows. Catalyzes the first step in hexosamine metabolism, converting fructose-6P into glucosamine-6P using glutamine as a nitrogen source. The chain is Glutamine--fructose-6-phosphate aminotransferase [isomerizing] from Corynebacterium diphtheriae (strain ATCC 700971 / NCTC 13129 / Biotype gravis).